We begin with the raw amino-acid sequence, 341 residues long: Phosphoribosylformylglycinamidine cyclo-ligase (341 aa).

This sequence belongs to the AIR synthase family.

It is found in the cytoplasm. It catalyses the reaction 2-formamido-N(1)-(5-O-phospho-beta-D-ribosyl)acetamidine + ATP = 5-amino-1-(5-phospho-beta-D-ribosyl)imidazole + ADP + phosphate + H(+). Its pathway is purine metabolism; IMP biosynthesis via de novo pathway; 5-amino-1-(5-phospho-D-ribosyl)imidazole from N(2)-formyl-N(1)-(5-phospho-D-ribosyl)glycinamide: step 2/2. In Xanthomonas euvesicatoria pv. vesicatoria (strain 85-10) (Xanthomonas campestris pv. vesicatoria), this protein is Phosphoribosylformylglycinamidine cyclo-ligase.